Here is a 427-residue protein sequence, read N- to C-terminus: Enolase (427 aa).

Gln163 provides a ligand contact to (2R)-2-phosphoglycerate. The active-site Proton donor is the Glu205. Positions 242, 285, and 312 each coordinate Mg(2+). Positions 337, 366, 367, and 388 each coordinate (2R)-2-phosphoglycerate. The Proton acceptor role is filled by Lys337.

Belongs to the enolase family. Mg(2+) serves as cofactor.

The protein localises to the cytoplasm. Its subcellular location is the secreted. The protein resides in the cell surface. The enzyme catalyses (2R)-2-phosphoglycerate = phosphoenolpyruvate + H2O. It functions in the pathway carbohydrate degradation; glycolysis; pyruvate from D-glyceraldehyde 3-phosphate: step 4/5. Its function is as follows. Catalyzes the reversible conversion of 2-phosphoglycerate (2-PG) into phosphoenolpyruvate (PEP). It is essential for the degradation of carbohydrates via glycolysis. The sequence is that of Enolase from Burkholderia ambifaria (strain MC40-6).